A 122-amino-acid polypeptide reads, in one-letter code: MSLTNEQIIEAIASKSVTEIVELIAAMEEKFGVSAAAAAVAVAAGPAEAAEEKTEFDVVLAGAGANKVAVIKAVRGATGLGLKEAKDLVESAPAVLKEGISKAEAEALKKELEEAGAQVEVK.

This sequence belongs to the bacterial ribosomal protein bL12 family. Homodimer. Part of the ribosomal stalk of the 50S ribosomal subunit. Forms a multimeric L10(L12)X complex, where L10 forms an elongated spine to which 2 to 4 L12 dimers bind in a sequential fashion. Binds GTP-bound translation factors.

Forms part of the ribosomal stalk which helps the ribosome interact with GTP-bound translation factors. Is thus essential for accurate translation. The polypeptide is Large ribosomal subunit protein bL12 (Pasteurella multocida (strain Pm70)).